Consider the following 125-residue polypeptide: Large ribosomal subunit protein eL31 (125 aa).

The protein belongs to the eukaryotic ribosomal protein eL31 family. Component of the large ribosomal subunit.

The protein resides in the cytoplasm. In terms of biological role, component of the large ribosomal subunit. The ribosome is a large ribonucleoprotein complex responsible for the synthesis of proteins in the cell. The chain is Large ribosomal subunit protein eL31 (rpl31) from Xenopus laevis (African clawed frog).